We begin with the raw amino-acid sequence, 143 residues long: Transcriptional regulator MraZ (143 aa).

SpoVT-AbrB domains follow at residues 5 to 47 and 76 to 119; these read EYNH…SSDE and ASEC…SNVE.

This sequence belongs to the MraZ family. As to quaternary structure, forms oligomers.

Its subcellular location is the cytoplasm. The protein resides in the nucleoid. The protein is Transcriptional regulator MraZ of Alkaliphilus oremlandii (strain OhILAs) (Clostridium oremlandii (strain OhILAs)).